The primary structure comprises 202 residues: Na(+)-translocating NADH-quinone reductase subunit E (202 aa).

The next 6 helical transmembrane spans lie at S11–I31, I35–V55, F81–V101, G114–V134, V144–I164, and I182–L202.

This sequence belongs to the NqrDE/RnfAE family. As to quaternary structure, composed of six subunits; NqrA, NqrB, NqrC, NqrD, NqrE and NqrF.

The protein localises to the cell inner membrane. The enzyme catalyses a ubiquinone + n Na(+)(in) + NADH + H(+) = a ubiquinol + n Na(+)(out) + NAD(+). Its function is as follows. NQR complex catalyzes the reduction of ubiquinone-1 to ubiquinol by two successive reactions, coupled with the transport of Na(+) ions from the cytoplasm to the periplasm. NqrA to NqrE are probably involved in the second step, the conversion of ubisemiquinone to ubiquinol. In Saccharophagus degradans (strain 2-40 / ATCC 43961 / DSM 17024), this protein is Na(+)-translocating NADH-quinone reductase subunit E.